Here is a 76-residue protein sequence, read N- to C-terminus: Exodeoxyribonuclease 7 small subunit (76 aa).

The protein belongs to the XseB family. As to quaternary structure, heterooligomer composed of large and small subunits.

It is found in the cytoplasm. It catalyses the reaction Exonucleolytic cleavage in either 5'- to 3'- or 3'- to 5'-direction to yield nucleoside 5'-phosphates.. Bidirectionally degrades single-stranded DNA into large acid-insoluble oligonucleotides, which are then degraded further into small acid-soluble oligonucleotides. The polypeptide is Exodeoxyribonuclease 7 small subunit (Gluconacetobacter diazotrophicus (strain ATCC 49037 / DSM 5601 / CCUG 37298 / CIP 103539 / LMG 7603 / PAl5)).